Consider the following 258-residue polypeptide: Pimeloyl-[acyl-carrier protein] methyl ester esterase (258 aa).

Positions 16-242 constitute an AB hydrolase-1 domain; that stretch reads LVLLHGWGLN…AAHAPFISHP (227 aa). Residues Trp22, 82-83, and 143-147 each bind substrate; these read SM and FLALQ. Ser82 functions as the Nucleophile in the catalytic mechanism. Residues Asp207 and His235 contribute to the active site. His235 serves as a coordination point for substrate.

It belongs to the AB hydrolase superfamily. Carboxylesterase BioH family. As to quaternary structure, monomer.

The protein localises to the cytoplasm. The enzyme catalyses 6-carboxyhexanoyl-[ACP] methyl ester + H2O = 6-carboxyhexanoyl-[ACP] + methanol + H(+). The protein operates within cofactor biosynthesis; biotin biosynthesis. In terms of biological role, the physiological role of BioH is to remove the methyl group introduced by BioC when the pimeloyl moiety is complete. It allows to synthesize pimeloyl-ACP via the fatty acid synthetic pathway through the hydrolysis of the ester bonds of pimeloyl-ACP esters. This is Pimeloyl-[acyl-carrier protein] methyl ester esterase from Yersinia pseudotuberculosis serotype IB (strain PB1/+).